We begin with the raw amino-acid sequence, 484 residues long: MEKKKLTTAAGAPVVDNNNVITAGPRGPMLLQDVWFLEKLAHFDREVIPERRMHAKGSGAFGTFTVTHDITKYTRAKIFSEVGKKTEMFARFSTVAGERGAADAERDIRGFALKFYTEEGNWDMVGNNTPVFYLRDPLKFPDLNHIVKRDPRTNMRNMAYKWDFFSHLPESLHQLTIDMSDRGLPLSYRFVHGFGSHTYSFINKDNERFWVKFHFRCQQGIKNLMDDEAEALVGKDRESSQRDLFEAIERGDYPRWKLQIQIMPEKEASTVPYNPFDLTKVWPHADYPLMDVGYFELNRNPDNYFSDVEQAAFSPANIVPGISFSPDKMLQGRLFSYGDAHRYRLGVNHHQIPVNAPKCPFHNYHRDGAMRVDGNSGNGITYEPNSGGVFQEQPDFKEPPLSIEGAADHWNHREDEDYFSQPRALYELLSDDEHQRMFARIAGELSQASKETQQRQIDLFTKVHPEYGAGVEKAIKVLEGKDAK.

Methionine 53 is subject to Methionine sulfone. Catalysis depends on residues histidine 54 and asparagine 127. Tyrosine 337 provides a ligand contact to heme.

In terms of assembly, homotetramer. Heme serves as cofactor. It depends on NADP(+) as a cofactor.

It is found in the cytoplasm. It carries out the reaction 2 H2O2 = O2 + 2 H2O. In terms of biological role, decomposes hydrogen peroxide into water and oxygen; serves to protect cells from the toxic effects of hydrogen peroxide. This chain is Catalase (katA), found in Proteus mirabilis.